The chain runs to 899 residues: Nuclear factor NF-kappa-B p100 subunit (899 aa).

Ser-23 and Ser-161 each carry phosphoserine. One can recognise an RHD domain in the interval 35–224 (ADGPYLVIVE…QPIHDSKSPG (190 aa)). Positions 337-341 (RKRRK) match the Nuclear localization signal motif. The tract at residues 346–377 (FSQPFGGGSHMGGGSGGSAGGYGGAGGGGSLG) is GRR. The segment at 403–434 (GGAQMAGSRRDTDAGEGAEEPRTPPEAPQGEP) is disordered. Residues 410–425 (SRRDTDAGEGAEEPRT) are compositionally biased toward basic and acidic residues. Thr-425 is subject to Phosphothreonine. ANK repeat units follow at residues 487-516 (NGDT…HAQY), 526-555 (LHQT…DPTL), 559-590 (HGDS…HAVP), 599-628 (EGLY…EVEA), 633-663 (GGRT…NVNA), and 667-696 (AGNT…DIHA). A disordered region spans residues 698–734 (NEEPLCPLPSPSTSGSDSDSEGPERDTQRNFRGHTPL). Residues Ser-713, Ser-715, and Ser-717 each carry the phosphoserine modification. Residues 729 to 755 (RGHTPLDLTCSTKVKTLLLNAAQNTTE) form an ANK 7 repeat. The Death domain occupies 764-851 (AGPGLSLGDA…EGVRLLKGPE (88 aa)). A Phosphoserine modification is found at Ser-812. Residues 851–865 (ETRDKLPSTEVKEDS) show a composition bias toward basic and acidic residues. The segment at 851 to 899 (ETRDKLPSTEVKEDSAYGSQSVEQEAEKLCPPPEPPGGLCHGHPQPQVH) is disordered. Lys-855 participates in a covalent cross-link: Glycyl lysine isopeptide (Lys-Gly) (interchain with G-Cter in ubiquitin). Ser-865 and Ser-869 each carry phosphoserine; by MAP3K14. Residues 887 to 899 (GGLCHGHPQPQVH) show a composition bias toward low complexity.

Component of the NF-kappa-B RelB-p52 complex. Homodimer; component of the NF-kappa-B p52-p52 complex. Component of the NF-kappa-B p65-p52 complex. Component of the NF-kappa-B p52-c-Rel complex. NFKB2/p52 interacts with NFKBIE. Component of a complex consisting of the NF-kappa-B p50-p50 homodimer and BCL3. Directly interacts with MEN1. In terms of processing, while translation occurs, the particular unfolded structure after the GRR repeat promotes the generation of p52 making it an acceptable substrate for the proteasome. This process is known as cotranslational processing. The processed form is active and the unprocessed form acts as an inhibitor (I kappa B-like), being able to form cytosolic complexes with NF-kappa B, trapping it in the cytoplasm. Complete folding of the region downstream of the GRR repeat precludes processing. Subsequent to MAP3K14-dependent serine phosphorylation, p100 polyubiquitination occurs then triggering its proteasome-dependent processing. Post-translationally, constitutive processing is tightly suppressed by its C-terminal processing inhibitory domain, named PID, which contains the death domain. In terms of processing, ubiquitinated by TRIM55; leading to processing by VCP and subsequent ubiquitin-dependent protein degradation by the proteasome. As to expression, highly expressed in lymph nodes and thymus.

The protein localises to the nucleus. The protein resides in the cytoplasm. In terms of biological role, NF-kappa-B is a pleiotropic transcription factor present in almost all cell types and is the endpoint of a series of signal transduction events that are initiated by a vast array of stimuli related to many biological processes such as inflammation, immunity, differentiation, cell growth, tumorigenesis and apoptosis. NF-kappa-B is a homo- or heterodimeric complex formed by the Rel-like domain-containing proteins RELA/p65, RELB, NFKB1/p105, NFKB1/p50, REL and NFKB2/p52. The dimers bind at kappa-B sites in the DNA of their target genes and the individual dimers have distinct preferences for different kappa-B sites that they can bind with distinguishable affinity and specificity. Different dimer combinations act as transcriptional activators or repressors, respectively. NF-kappa-B is controlled by various mechanisms of post-translational modification and subcellular compartmentalization as well as by interactions with other cofactors or corepressors. NF-kappa-B complexes are held in the cytoplasm in an inactive state complexed with members of the NF-kappa-B inhibitor (I-kappa-B) family. In a conventional activation pathway, I-kappa-B is phosphorylated by I-kappa-B kinases (IKKs) in response to different activators, subsequently degraded thus liberating the active NF-kappa-B complex which translocates to the nucleus. In a non-canonical activation pathway, the MAP3K14-activated CHUK/IKKA homodimer phosphorylates NFKB2/p100 associated with RelB, inducing its proteolytic processing to NFKB2/p52 and the formation of NF-kappa-B RelB-p52 complexes. The NF-kappa-B heterodimeric RelB-p52 complex is a transcriptional activator. The NF-kappa-B p52-p52 homodimer is a transcriptional repressor. NFKB2 appears to have dual functions such as cytoplasmic retention of attached NF-kappa-B proteins by p100 and generation of p52 by a cotranslational processing. The proteasome-mediated process ensures the production of both p52 and p100 and preserves their independent function. p52 binds to the kappa-B consensus sequence 5'-GGRNNYYCC-3', located in the enhancer region of genes involved in immune response and acute phase reactions. p52 and p100 are respectively the minor and major form; the processing of p100 being relatively poor. Isoform p49 is a subunit of the NF-kappa-B protein complex, which stimulates the HIV enhancer in synergy with p65. In concert with RELB, regulates the circadian clock by repressing the transcriptional activator activity of the CLOCK-BMAL1 heterodimer. This chain is Nuclear factor NF-kappa-B p100 subunit (Nfkb2), found in Mus musculus (Mouse).